The primary structure comprises 1147 residues: Tip elongation aberrant protein 1 (1147 aa).

A compositionally biased stretch (basic residues) spans 1 to 16; that stretch reads MSFLFKRNKGSAHKPT. Positions 1 to 64 are disordered; that stretch reads MSFLFKRNKG…TGSGSHITAS (64 aa). Polar residues predominate over residues 18–32; the sequence is PNFSKTSTTPSTSQL. Kelch repeat units follow at residues 94 to 144, 146 to 198, 199 to 253, 254 to 303, 305 to 351, and 355 to 402; these read EIYI…LIGN, FIVF…CLGS, KICL…TFSD, KLYI…VVEG, LYVF…TLSC, and TLVL…SNST. 2 disordered regions span residues 384 to 403 and 408 to 547; these read SVPTTSGRQRNTSFFSNSTG and SAFN…NAQS. Composition is skewed to polar residues over residues 385-403, 408-465, and 472-489; these read VPTTSGRQRNTSFFSNSTG, SAFN…SNDL, and TRSNSSSILQPSYNLNSH. Residues 502–512 are compositionally biased toward low complexity; the sequence is SSLNSQQLSNQ. S503 is subject to Phosphoserine. Over residues 519–547 the composition is skewed to polar residues; it reads VSPTLSFVPSSHSMEQGNGSVASANNAQS. Positions 538-1147 are interaction with tea4; the sequence is SVASANNAQS…AKEPVHDNEN (610 aa). Coiled coils occupy residues 611 to 649, 716 to 838, 879 to 990, and 1084 to 1105; these read KLYEILRDSASKIDSLTEKLKVANAEKNAALCEAALEKV, QTSS…IIDA, KNNE…ALEE, and IKSLSDSVMLLKNQIDDLAKEK. The segment at 948–1147 is retention at microtubule cell ends; sequence KALEQRNTGA…AKEPVHDNEN (200 aa).

Major component of the tea1 cell-end complex. Interacts with rax2, tea4 and tip1. Interacts with for3 in the presence of tea4.

It localises to the cytoplasm. It is found in the cytoskeleton. Cell polarity protein. Acts as an end marker, directing the growth machinery to the cell poles. Involved in the regulation of microtubular organization, affecting the maintenance of a single central axis. Prevents the curling of microtubule tips around the cell ends and is required for the retention of polarity factors such as pom1, tip1 and tea2 at the cell ends, necessary for the cell to grow in a straight line. Links tip1 and tea4 in a common complex. The chain is Tip elongation aberrant protein 1 (tea1) from Schizosaccharomyces pombe (strain 972 / ATCC 24843) (Fission yeast).